The following is a 424-amino-acid chain: Probable ribonuclease FAU-1 (424 aa).

This sequence belongs to the FAU-1 family.

Probable RNase involved in rRNA stability through maturation and/or degradation of precursor rRNAs. Binds to RNA in loop regions with AU-rich sequences. In Saccharolobus islandicus (strain L.S.2.15 / Lassen #1) (Sulfolobus islandicus), this protein is Probable ribonuclease FAU-1.